An 83-amino-acid polypeptide reads, in one-letter code: Cytochrome b559 subunit alpha (83 aa).

Residues valine 21–tryptophan 35 form a helical membrane-spanning segment. Histidine 23 lines the heme pocket.

This sequence belongs to the PsbE/PsbF family. In terms of assembly, heterodimer of an alpha subunit and a beta subunit. PSII is composed of 1 copy each of membrane proteins PsbA, PsbB, PsbC, PsbD, PsbE, PsbF, PsbH, PsbI, PsbJ, PsbK, PsbL, PsbM, PsbT, PsbX, PsbY, PsbZ, Psb30/Ycf12, at least 3 peripheral proteins of the oxygen-evolving complex and a large number of cofactors. It forms dimeric complexes. Heme b is required as a cofactor.

The protein localises to the plastid. Its subcellular location is the chloroplast thylakoid membrane. Functionally, this b-type cytochrome is tightly associated with the reaction center of photosystem II (PSII). PSII is a light-driven water:plastoquinone oxidoreductase that uses light energy to abstract electrons from H(2)O, generating O(2) and a proton gradient subsequently used for ATP formation. It consists of a core antenna complex that captures photons, and an electron transfer chain that converts photonic excitation into a charge separation. The sequence is that of Cytochrome b559 subunit alpha from Chaetosphaeridium globosum (Charophycean green alga).